Here is an 828-residue protein sequence, read N- to C-terminus: Phenylalanine--tRNA ligase beta subunit (828 aa).

The tRNA-binding domain occupies 43 to 161 (LSKNTNLVVG…DQIALGSNAL (119 aa)). Residues 203–230 (KKKEKKTINYKTKNSKDQTNRKTTPKLN) are disordered. The region spanning 436 to 519 (RTNPTISLDL…RFYGCHKLPP (84 aa)) is the B5 domain. Mg(2+) contacts are provided by D497, D503, and D507. The FDX-ACB domain occupies 736 to 828 (PKFPTVIRDL…LIKHFRIEIR (93 aa)).

Belongs to the phenylalanyl-tRNA synthetase beta subunit family. Type 1 subfamily. As to quaternary structure, tetramer of two alpha and two beta subunits. Mg(2+) serves as cofactor.

Its subcellular location is the cytoplasm. It catalyses the reaction tRNA(Phe) + L-phenylalanine + ATP = L-phenylalanyl-tRNA(Phe) + AMP + diphosphate + H(+). The sequence is that of Phenylalanine--tRNA ligase beta subunit from Aster yellows witches'-broom phytoplasma (strain AYWB).